The sequence spans 225 residues: Ribose-5-phosphate isomerase A (225 aa).

Residues 32 to 35 (TGST), 85 to 88 (DGAD), and 98 to 101 (KGGG) each bind substrate. Catalysis depends on Glu107, which acts as the Proton acceptor. Residue Lys125 participates in substrate binding.

It belongs to the ribose 5-phosphate isomerase family. In terms of assembly, homodimer.

The enzyme catalyses aldehydo-D-ribose 5-phosphate = D-ribulose 5-phosphate. The protein operates within carbohydrate degradation; pentose phosphate pathway; D-ribose 5-phosphate from D-ribulose 5-phosphate (non-oxidative stage): step 1/1. Catalyzes the reversible conversion of ribose-5-phosphate to ribulose 5-phosphate. In Hahella chejuensis (strain KCTC 2396), this protein is Ribose-5-phosphate isomerase A.